Consider the following 946-residue polypeptide: Increased sodium tolerance protein 2 (946 aa).

The Cytoplasmic segment spans residues 1-121 (MSQTITSLDP…SNLTNNPKQS (121 aa)). The chain crosses the membrane as a helical span at residues 122-142 (LYFAFLQNYIKWLIPFSFFGL). Over 143–153 (SIRFLSNFTYE) the chain is Extracellular. A helical membrane pass occupies residues 154 to 174 (FNSTYSLFAILWTLSFTAFWL). The Cytoplasmic segment spans residues 175–217 (YKYEPFWSDRLSKYSSFSTIEFLQDKQKAQKKASSVIMLKKCC). The chain crosses the membrane as a helical span at residues 218–238 (FIPVALLFGAILLSFQLYCFA). Over 239–253 (LEIFIKQIYNGPMIS) the chain is Extracellular. The helical transmembrane segment at 254 to 274 (ILSFLPTILICTFTPVLTVIY) threads the bilayer. The Cytoplasmic segment spans residues 275–302 (NKYFVEPMTKWENHSSVVNAKKSKEAKN). Residues 303 to 323 (FVIIFLSSYVPLLITLFLYLP) form a helical membrane-spanning segment. At 324 to 447 (MGHLLTAEIR…DANFKKLLLQ (124 aa)) the chain is on the extracellular side. A helical membrane pass occupies residues 448-468 (FGYLVMFSTIWPLAPFICLIV). The Cytoplasmic portion of the chain corresponds to 469 to 505 (NLIVYQVDLRKAVLYSKPEYFPFPIYDKPSSVSNTQK). The chain crosses the membrane as a helical span at residues 506 to 526 (LTVGLWNSVLVMFSILGCVIT). The Extracellular portion of the chain corresponds to 527–563 (ATLTYMYQSCNIPGVGAHTSIHTNKAWYLANPINHSW). The chain crosses the membrane as a helical span at residues 564–584 (INIVLYAVFIEHVSVAIFFLF). Topologically, residues 585–946 (SSILKSSHDD…GLLHKLKKKL (362 aa)) are cytoplasmic. Disordered regions lie at residues 617–638 (EKIPSPEFNSNNEKELVQRKGS) and 665–718 (THAN…TEKR). Residues 628-638 (NEKELVQRKGS) show a composition bias toward basic and acidic residues. Ser-638 carries the phosphoserine modification. The span at 671–689 (PSSLSSASSPSLSSSSSSS) shows a compositional bias: low complexity. Thr-701 is subject to Phosphothreonine. Ser-704 and Ser-720 each carry phosphoserine. Position 726 is a phosphothreonine (Thr-726). Ser-729 is subject to Phosphoserine. Tyr-730 carries the phosphotyrosine modification. Ser-757 bears the Phosphoserine mark. Residues 759–784 (RDAKSSAESSNATNNNTLGTESKLLP) form a disordered region. Residues 764 to 775 (SAESSNATNNNT) are compositionally biased toward low complexity. Phosphoserine is present on residues Ser-793, Ser-844, and Ser-847. A disordered region spans residues 846 to 946 (VSVATEQTKK…GLLHKLKKKL (101 aa)). Phosphothreonine is present on Thr-850. Positions 859 to 868 (STKNGPSRSI) are enriched in polar residues. A compositionally biased stretch (low complexity) spans 884–893 (TTTTTTTDAT). Basic residues predominate over residues 895-905 (PHHHHHHHRHR). Positions 916–927 (SKTTESSSSSSA) are enriched in low complexity. Basic residues predominate over residues 931–946 (KPKHKKGLLHKLKKKL).

Interacts with BTN2.

The protein localises to the cell membrane. Functionally, may be involved in ion homeostasis together with BTN1 or BTN2. This chain is Increased sodium tolerance protein 2 (IST2), found in Saccharomyces cerevisiae (strain ATCC 204508 / S288c) (Baker's yeast).